Here is a 343-residue protein sequence, read N- to C-terminus: Protein RecA (343 aa).

Position 64–71 (64–71 (GPESSGKT)) interacts with ATP.

This sequence belongs to the RecA family.

It is found in the cytoplasm. In terms of biological role, can catalyze the hydrolysis of ATP in the presence of single-stranded DNA, the ATP-dependent uptake of single-stranded DNA by duplex DNA, and the ATP-dependent hybridization of homologous single-stranded DNAs. It interacts with LexA causing its activation and leading to its autocatalytic cleavage. In Cereibacter sphaeroides (strain ATCC 17023 / DSM 158 / JCM 6121 / CCUG 31486 / LMG 2827 / NBRC 12203 / NCIMB 8253 / ATH 2.4.1.) (Rhodobacter sphaeroides), this protein is Protein RecA.